We begin with the raw amino-acid sequence, 353 residues long: 3-isopropylmalate dehydrogenase (353 aa).

73–86 (GPQYDTLDRPLRPE) is a binding site for NAD(+). Positions 93, 103, 131, and 220 each coordinate substrate. Mg(2+)-binding residues include Asp-220, Asp-244, and Asp-248. 278–290 (GSAPDIAGKNLAN) serves as a coordination point for NAD(+).

Belongs to the isocitrate and isopropylmalate dehydrogenases family. LeuB type 1 subfamily. As to quaternary structure, homodimer. The cofactor is Mg(2+). Mn(2+) is required as a cofactor.

Its subcellular location is the cytoplasm. The catalysed reaction is (2R,3S)-3-isopropylmalate + NAD(+) = 4-methyl-2-oxopentanoate + CO2 + NADH. It functions in the pathway amino-acid biosynthesis; L-leucine biosynthesis; L-leucine from 3-methyl-2-oxobutanoate: step 3/4. Catalyzes the oxidation of 3-carboxy-2-hydroxy-4-methylpentanoate (3-isopropylmalate) to 3-carboxy-4-methyl-2-oxopentanoate. The product decarboxylates to 4-methyl-2 oxopentanoate. The sequence is that of 3-isopropylmalate dehydrogenase from Thiobacillus denitrificans (strain ATCC 25259 / T1).